Reading from the N-terminus, the 198-residue chain is Recombination protein RecR (198 aa).

The C4-type zinc finger occupies 56–71 (CKVCGNFSEEDECVIC). The region spanning 79–174 (GVICVVEEPK…RVSKLASGLP (96 aa)) is the Toprim domain.

Belongs to the RecR family.

May play a role in DNA repair. It seems to be involved in an RecBC-independent recombinational process of DNA repair. It may act with RecF and RecO. The polypeptide is Recombination protein RecR (Tropheryma whipplei (strain Twist) (Whipple's bacillus)).